A 159-amino-acid polypeptide reads, in one-letter code: Ribosomal RNA large subunit methyltransferase H (159 aa).

Residues L76, G108, and 127–132 (FSRMTF) each bind S-adenosyl-L-methionine.

It belongs to the RNA methyltransferase RlmH family. In terms of assembly, homodimer.

Its subcellular location is the cytoplasm. It catalyses the reaction pseudouridine(1915) in 23S rRNA + S-adenosyl-L-methionine = N(3)-methylpseudouridine(1915) in 23S rRNA + S-adenosyl-L-homocysteine + H(+). Its function is as follows. Specifically methylates the pseudouridine at position 1915 (m3Psi1915) in 23S rRNA. The polypeptide is Ribosomal RNA large subunit methyltransferase H (Bacillus pumilus (strain SAFR-032)).